The chain runs to 276 residues: MKTSKTKTPKSVLIAGPCVIESLENLRSIAIKLQPLANNERLDFYFKASFDKANRTSLESYRGPGLGKGLEMLQTIKDEFGYKILTDVHESYQASAAAKVADILQIPAFLCRQTDLIVEVSQTNAIINIKKGQFMNPKDMQYSVLKALKTRDSSIQSPTYETALKNGVWLCERGSSFGYGNLVVDMRSLKIMREFAPVIFDATHSVQMPGGANGKSSGDSSFAPILARAAAAVGIDGLFAETHVDPKNALSDGANMLKPDELEHLVADMLKIQNLF.

The protein belongs to the KdsA family.

The protein resides in the cytoplasm. It catalyses the reaction D-arabinose 5-phosphate + phosphoenolpyruvate + H2O = 3-deoxy-alpha-D-manno-2-octulosonate-8-phosphate + phosphate. Its pathway is carbohydrate biosynthesis; 3-deoxy-D-manno-octulosonate biosynthesis; 3-deoxy-D-manno-octulosonate from D-ribulose 5-phosphate: step 2/3. It participates in bacterial outer membrane biogenesis; lipopolysaccharide biosynthesis. This Helicobacter pylori (strain Shi470) protein is 2-dehydro-3-deoxyphosphooctonate aldolase.